The following is a 492-amino-acid chain: 3-octaprenyl-4-hydroxybenzoate carboxy-lyase (492 aa).

A Mn(2+)-binding site is contributed by asparagine 175. Residues 178–180 (IYR), 192–194 (RWL), and 197–198 (RG) contribute to the prenylated FMN site. Residue glutamate 241 coordinates Mn(2+). The active-site Proton donor is the aspartate 290.

Belongs to the UbiD family. Homohexamer. The cofactor is prenylated FMN. Mn(2+) serves as cofactor.

Its subcellular location is the cell membrane. It catalyses the reaction a 4-hydroxy-3-(all-trans-polyprenyl)benzoate + H(+) = a 2-(all-trans-polyprenyl)phenol + CO2. It functions in the pathway cofactor biosynthesis; ubiquinone biosynthesis. Its function is as follows. Catalyzes the decarboxylation of 3-octaprenyl-4-hydroxy benzoate to 2-octaprenylphenol, an intermediate step in ubiquinone biosynthesis. The protein is 3-octaprenyl-4-hydroxybenzoate carboxy-lyase of Salmonella paratyphi A (strain ATCC 9150 / SARB42).